A 245-amino-acid chain; its full sequence is tRNA pseudouridine synthase A (245 aa).

The active-site Nucleophile is the D52. Position 111 (Y111) interacts with substrate.

Belongs to the tRNA pseudouridine synthase TruA family. As to quaternary structure, homodimer.

It carries out the reaction uridine(38/39/40) in tRNA = pseudouridine(38/39/40) in tRNA. Functionally, formation of pseudouridine at positions 38, 39 and 40 in the anticodon stem and loop of transfer RNAs. The polypeptide is tRNA pseudouridine synthase A (Zymomonas mobilis subsp. mobilis (strain ATCC 31821 / ZM4 / CP4)).